Consider the following 297-residue polypeptide: N-acetylmuramoyl-L-alanine amidase XlyA (297 aa).

The N-terminal stretch at 1 to 44 (MVNIIQDFIPVGANNRPGYAMTPLYITVHNTANTAVGADAAAHA) is a signal peptide. Residues 45–140 (RYLKNPDTTT…KYWSGKECPR (96 aa)) enclose the N-acetylmuramoyl-L-alanine amidase domain. One can recognise a LysM domain in the interval 159-203 (QTYVVKQGDTLTSIARAFGVTVAQLQEWNNIEDPNLIRVGQVLIV).

It belongs to the N-acetylmuramoyl-L-alanine amidase 2 family.

Its subcellular location is the secreted. It catalyses the reaction Hydrolyzes the link between N-acetylmuramoyl residues and L-amino acid residues in certain cell-wall glycopeptides.. Autolysins are involved in some important biological processes such as cell separation, cell-wall turnover, competence for genetic transformation, formation of the flagella and sporulation. This Bacillus subtilis (strain 168) protein is N-acetylmuramoyl-L-alanine amidase XlyA (xlyA).